A 457-amino-acid polypeptide reads, in one-letter code: Aromatic amino acid transport protein AroP (457 aa).

Residues 1-19 (MMEGQQHGEQLKRGLKNRH) are Cytoplasmic-facing. Residues 20-40 (IQLIALGGAIGTGLFLGSASV) form a helical membrane-spanning segment. Residues 41–42 (IQ) lie on the Periplasmic side of the membrane. The chain crosses the membrane as a helical span at residues 43 to 63 (SAGPGIILGYAIAGFIAFLIM). The Cytoplasmic portion of the chain corresponds to 64–86 (RQLGEMVVEEPVAGSFSHFAYKY). A helical membrane pass occupies residues 87–107 (WGSFAGFASGWNYWVLYVLVA). Over 108–117 (MAELTAVGKY) the chain is Periplasmic. Residues 118–138 (IQFWYPEIPTWVSAAVFFVVI) form a helical membrane-spanning segment. Over 139–155 (NAINLTNVTVFGEMEFW) the chain is Cytoplasmic. The chain crosses the membrane as a helical span at residues 156-176 (FAIIKVIAVVAMIIFGGWLLF). At 177 to 201 (SGNGGPQASVSNLWDQGGFLPHGFT) the chain is on the periplasmic side. A helical transmembrane segment spans residues 202–222 (GLVMMMAIIMFSFGGLELVGI). Residues 223–240 (TAAEADNPEQSIPKATNQ) are Cytoplasmic-facing. Residues 241-261 (VIYRILIFYIGSLAVLLSLMP) form a helical membrane-spanning segment. Over 262-271 (WTRVTADTSP) the chain is Periplasmic. A helical membrane pass occupies residues 272–292 (FVLIFHELGDTFVANALNIVV). The Cytoplasmic portion of the chain corresponds to 293-333 (LTAALSVYNSCVYCNSRMLFGLAQQGNAPKALASVDKRGVP). The helical transmembrane segment at 334–354 (VNTILVSALVTALCVLINYLA) threads the bilayer. Over 355 to 358 (PESA) the chain is Periplasmic. A helical membrane pass occupies residues 359–379 (FGLLMALVVSALVINWAMISL). The Cytoplasmic segment spans residues 380–407 (AHMKFRRAKQEQGVVTRFPALLYPLGNW). Residues 408-428 (ICLLFMAVVLVIMLMTPGMAI) form a helical membrane-spanning segment. Residue serine 429 is a topological domain, periplasmic. The helical transmembrane segment at 430–450 (VYLIPVWLVVLGIGYLFKEKT) threads the bilayer. Topologically, residues 451–457 (AKAVKAH) are cytoplasmic.

Belongs to the amino acid-polyamine-organocation (APC) superfamily. Amino acid transporter (AAT) (TC 2.A.3.1) family.

It is found in the cell inner membrane. It catalyses the reaction L-phenylalanine(in) + H(+)(in) = L-phenylalanine(out) + H(+)(out). The catalysed reaction is L-tryptophan(in) + H(+)(in) = L-tryptophan(out) + H(+)(out). The enzyme catalyses L-tyrosine(in) + H(+)(in) = L-tyrosine(out) + H(+)(out). Its function is as follows. Permease that is involved in the active transport across the cytoplasmic membrane of all three aromatic amino acids, phenylalanine, tyrosine and tryptophan. This is Aromatic amino acid transport protein AroP (aroP) from Escherichia coli O157:H7.